A 229-amino-acid polypeptide reads, in one-letter code: NAD(P)H-quinone oxidoreductase subunit K, chloroplastic (229 aa).

Cysteine 43, cysteine 44, cysteine 108, and cysteine 139 together coordinate [4Fe-4S] cluster.

The protein belongs to the complex I 20 kDa subunit family. NDH is composed of at least 16 different subunits, 5 of which are encoded in the nucleus. It depends on [4Fe-4S] cluster as a cofactor.

It is found in the plastid. It localises to the chloroplast thylakoid membrane. It catalyses the reaction a plastoquinone + NADH + (n+1) H(+)(in) = a plastoquinol + NAD(+) + n H(+)(out). The enzyme catalyses a plastoquinone + NADPH + (n+1) H(+)(in) = a plastoquinol + NADP(+) + n H(+)(out). Its function is as follows. NDH shuttles electrons from NAD(P)H:plastoquinone, via FMN and iron-sulfur (Fe-S) centers, to quinones in the photosynthetic chain and possibly in a chloroplast respiratory chain. The immediate electron acceptor for the enzyme in this species is believed to be plastoquinone. Couples the redox reaction to proton translocation, and thus conserves the redox energy in a proton gradient. The chain is NAD(P)H-quinone oxidoreductase subunit K, chloroplastic from Coffea arabica (Arabian coffee).